Reading from the N-terminus, the 303-residue chain is Uridine diphosphate glucose pyrophosphatase NUDT22 (303 aa).

Residues Phe-56, Tyr-87, Arg-139, Ala-144, Asp-151, His-156, and Glu-158 each coordinate substrate. In terms of domain architecture, Nudix hydrolase spans 118–285 (ADPLGVGAAL…KGAIILYNRV (168 aa)). Residues 148–168 (GLVDVPGGHPEPQALCPGGSP) form a disordered region. A Nudix box motif is present at residues 175 to 196 (GQLVVHELFSSVLQEICDEVNL). Positions 189 and 193 each coordinate Mg(2+). A substrate-binding site is contributed by Ser-274.

This sequence belongs to the Nudix hydrolase family. It depends on Mg(2+) as a cofactor.

The catalysed reaction is UDP-sugar + H2O = UMP + alpha-D-aldose 1-phosphate.. In terms of biological role, hydrolyzes UDP-glucose to glucose 1-phosphate and UMP and UDP-galactose to galactose 1-phosphate and UMP. Preferred substrate is UDP-glucose. This Homo sapiens (Human) protein is Uridine diphosphate glucose pyrophosphatase NUDT22 (NUDT22).